Here is a 689-residue protein sequence, read N- to C-terminus: Transcription termination factor Rho (689 aa).

Over residues Met1 to Thr20 the composition is skewed to polar residues. Disordered regions lie at residues Met1–Val90 and Ala151–Asn213. A compositionally biased stretch (basic residues) spans Pro52–Ala65. Low complexity-rich tracts occupy residues Asn170–Glu183 and Asn191–Asn213. Residues Ile287–Glu362 enclose the Rho RNA-BD domain. ATP contacts are provided by residues Gly405–Ser410, Arg417–Val422, and Arg448.

Belongs to the Rho family. Homohexamer. The homohexamer assembles into an open ring structure.

Its function is as follows. Facilitates transcription termination by a mechanism that involves Rho binding to the nascent RNA, activation of Rho's RNA-dependent ATPase activity, and release of the mRNA from the DNA template. The chain is Transcription termination factor Rho from Fibrobacter succinogenes (strain ATCC 19169 / S85).